The following is a 201-amino-acid chain: Recombination protein RecR (201 aa).

A C4-type zinc finger spans residues 57-72 (CSDCRTFTEQDVCAIC). The region spanning 81 to 176 (GQICVVESPA…MASRIAHGVP (96 aa)) is the Toprim domain.

It belongs to the RecR family.

Its function is as follows. May play a role in DNA repair. It seems to be involved in an RecBC-independent recombinational process of DNA repair. It may act with RecF and RecO. This is Recombination protein RecR from Pectobacterium carotovorum subsp. carotovorum (strain PC1).